Consider the following 396-residue polypeptide: Tryptophan synthase beta chain (396 aa).

N6-(pyridoxal phosphate)lysine is present on lysine 86.

This sequence belongs to the TrpB family. Tetramer of two alpha and two beta chains. Requires pyridoxal 5'-phosphate as cofactor.

The enzyme catalyses (1S,2R)-1-C-(indol-3-yl)glycerol 3-phosphate + L-serine = D-glyceraldehyde 3-phosphate + L-tryptophan + H2O. Its pathway is amino-acid biosynthesis; L-tryptophan biosynthesis; L-tryptophan from chorismate: step 5/5. The beta subunit is responsible for the synthesis of L-tryptophan from indole and L-serine. This is Tryptophan synthase beta chain from Vibrio campbellii (strain ATCC BAA-1116).